Consider the following 333-residue polypeptide: Protein FAM170A (333 aa).

Disordered stretches follow at residues 1-45 (MKRR…GVGE), 73-107 (LQDS…PSYK), and 143-214 (ETSE…AKTP). A compositionally biased stretch (basic and acidic residues) spans 10-29 (LEIEESKEAGISKSQEDISH). Residues 92–105 (TTAPSQQASSSCPS) are compositionally biased toward low complexity. The segment covering 143-156 (ETSESLEKQPRMEE) has biased composition (basic and acidic residues). Residues 170–179 (SDVSTRNLLS) show a composition bias toward polar residues. Over residues 185–196 (GEEKEHEEKPES) the composition is skewed to basic and acidic residues. Thr-213 carries the phosphothreonine modification. Residues 224 to 248 (FRCMACCRVFATMESLQEHVQYGIR) form a C2H2-type; degenerate zinc finger. Residues 267-333 (MESESTQEEE…RKDHCDNSGS (67 aa)) are disordered. Residues 271 to 281 (STQEEEEDHTE) show a composition bias toward acidic residues. Over residues 282-293 (ETEKPKEEKAEE) the composition is skewed to basic and acidic residues. At Ser-308 the chain carries Phosphoserine.

It belongs to the FAM170 family. Testis-specific.

It localises to the nucleus. In terms of biological role, acts as a nuclear transcription factor that positively regulates the expression of heat shock genes. Binds to heat shock promoter elements (HSE). The chain is Protein FAM170A (Fam170a) from Mus musculus (Mouse).